Here is a 527-residue protein sequence, read N- to C-terminus: EGF domain-specific O-linked N-acetylglucosamine transferase (527 aa).

An N-terminal signal peptide occupies residues methionine 1–serine 17. Positions aspartate 295 to aspartate 297 match the Required for optimal activity motif. The N-linked (GlcNAc...) asparagine glycan is linked to asparagine 354. The Prevents secretion from ER signature appears at histidine 524 to leucine 527.

This sequence belongs to the glycosyltransferase 61 family.

The protein localises to the endoplasmic reticulum lumen. It catalyses the reaction L-seryl-[protein] + UDP-N-acetyl-alpha-D-glucosamine = 3-O-(N-acetyl-beta-D-glucosaminyl)-L-seryl-[protein] + UDP + H(+). The catalysed reaction is L-threonyl-[protein] + UDP-N-acetyl-alpha-D-glucosamine = 3-O-(N-acetyl-beta-D-glucosaminyl)-L-threonyl-[protein] + UDP + H(+). Catalyzes the transfer of a single N-acetylglucosamine from UDP-GlcNAc to a serine or threonine residue in extracellular proteins resulting in their modification with a beta-linked N-acetylglucosamine (O-GlcNAc). Specifically glycosylates the Thr residue located between the fifth and sixth conserved cysteines of folded EGF-like domains. The chain is EGF domain-specific O-linked N-acetylglucosamine transferase (EOGT) from Pan troglodytes (Chimpanzee).